The chain runs to 66 residues: Antitoxin RelB2 (66 aa).

Antitoxin component of a type II toxin-antitoxin (TA) system. Neutralizes the effect of cognate toxin RelE2, but no other RelE or ParE toxin. In Caulobacter vibrioides (strain ATCC 19089 / CIP 103742 / CB 15) (Caulobacter crescentus), this protein is Antitoxin RelB2 (relB2).